A 232-amino-acid chain; its full sequence is N-(5'-phosphoribosyl)anthranilate isomerase (232 aa).

It belongs to the TrpF family.

It catalyses the reaction N-(5-phospho-beta-D-ribosyl)anthranilate = 1-(2-carboxyphenylamino)-1-deoxy-D-ribulose 5-phosphate. Its pathway is amino-acid biosynthesis; L-tryptophan biosynthesis; L-tryptophan from chorismate: step 3/5. The sequence is that of N-(5'-phosphoribosyl)anthranilate isomerase (TRP1) from Wickerhamomyces anomalus (Yeast).